The chain runs to 514 residues: Zinc finger CCCH-type with G patch domain-containing protein (514 aa).

Positions 96–129 (GEEPQPPGAGDGASTGSKDSEEEEEEEDGSSGMK) are disordered. A compositionally biased stretch (acidic residues) spans 115–124 (SEEEEEEEDG). The C3H1-type zinc finger occupies 171–197 (KAMKPCPFFLDGKCRFDDSCRFSHGQV). Disordered stretches follow at residues 262 to 288 (IPPLRGSDSSSSDDDDDDEEEDDAAED), 363 to 422 (QQRK…AAER), and 494 to 514 (EEHSLQREQRKADTHKKMTEF). A compositionally biased stretch (acidic residues) spans 272-287 (SSDDDDDDEEEDDAAE). One can recognise a G-patch domain in the interval 315-373 (TRGIGSKLLARMGYEIGKGLGRNAEGRVEPIQAVLLPKGKSLDQCIEMQQRKKAGGKRE). Residues 365 to 383 (RKKAGGKREHKAGKRRPRA) are compositionally biased toward basic residues.

Its subcellular location is the nucleus. Its function is as follows. Transcription repressor that specifically binds the 5'-GGAG[GA]A[GA]A-3' consensus sequence. Represses transcription by recruiting the chromatin multiprotein complex NuRD to target promoters. Negatively regulates expression of EGFR, a gene involved in cell proliferation, survival and migration. The protein is Zinc finger CCCH-type with G patch domain-containing protein (zgpat) of Xenopus tropicalis (Western clawed frog).